Consider the following 389-residue polypeptide: tRNA pseudouridine synthase Pus10 (389 aa).

Asp-213 functions as the Nucleophile in the catalytic mechanism. Tyr-278 and Tyr-350 together coordinate substrate.

The protein belongs to the pseudouridine synthase Pus10 family.

It catalyses the reaction uridine(54) in tRNA = pseudouridine(54) in tRNA. The catalysed reaction is uridine(55) in tRNA = pseudouridine(55) in tRNA. Its function is as follows. Responsible for synthesis of pseudouridine from uracil-54 and uracil-55 in the psi GC loop of transfer RNAs. This chain is tRNA pseudouridine synthase Pus10, found in Thermoplasma acidophilum (strain ATCC 25905 / DSM 1728 / JCM 9062 / NBRC 15155 / AMRC-C165).